The sequence spans 415 residues: Teichoic acid D-alanyltransferase (415 aa).

The Extracellular segment spans residues 1–16; sequence MIDFLKQLPHLEPYGN. Residues 17–36 form a helical membrane-spanning segment; that stretch reads PFYFIYLGIALLPIFIGLFF. Over 37–40 the chain is Cytoplasmic; it reads KKRF. A helical transmembrane segment spans residues 41–56; that stretch reads AIYECLVSITFIVLAL. Residues 57-60 lie on the Extracellular side of the membrane; it reads TGTH. Residues 61–87 traverse the membrane as a helical segment; that stretch reads ASQILALLFYIVWQIIWVYSYKRYRSQ. Topologically, residues 88–90 are cytoplasmic; the sequence is RDN. Residues 91–115 traverse the membrane as a helical segment; the sequence is KWVFYLHSFLVVLPLILVKVEPTIN. Residues 116–125 are Extracellular-facing; that stretch reads GTQSLLNFLG. A helical membrane pass occupies residues 126-142; it reads ISYLTFRAVGMIIEMRD. The Cytoplasmic portion of the chain corresponds to 143 to 149; the sequence is GVLKEFT. An intramembrane segment occupies 150–179; the sequence is LGEFLRFMLFMPTFTSGPIDRFKRFNEDYQ. The Cytoplasmic portion of the chain corresponds to 180-183; it reads SIPN. Residues 184-227 traverse the membrane as a helical segment; sequence RDELLNMLEQAVKYIMLGFLYKFVLAQIFGSMLLPPLKAQALSQ. Residues 228–232 are Extracellular-facing; the sequence is GGIFN. The helical transmembrane segment at 233 to 264 threads the bilayer; that stretch reads LPTLGVMYVYGFDLFFDFAGYSMFALAVSNLM. Topologically, residues 265-274 are cytoplasmic; sequence GIKSPINFDK. Residues 275-311 lie within the membrane without spanning it; that stretch reads PFISRDMKEFWNRWHMSLSFWFRDFVFMRLVIVLMRN. Over 312–316 the chain is Cytoplasmic; it reads KVFKN. A helical transmembrane segment spans residues 317 to 336; the sequence is RNTTSNVAYIINMMVMGFWH. H336 is a catalytic residue. The Extracellular segment spans residues 337–339; it reads GIT. A helical membrane pass occupies residues 340-373; it reads WYYIAYGIFHGIGLVINDAWLRKKKTINKDRKKA. Residues 374 to 381 are Cytoplasmic-facing; the sequence is GLKPLPEN. The helical transmembrane segment at 382-404 threads the bilayer; that stretch reads KWTKALGIFITFNTVMLSFLIFS. Over 405–415 the chain is Extracellular; sequence GFLNDLWFTKK.

This sequence belongs to the membrane-bound acyltransferase family.

It localises to the cell membrane. Its pathway is cell wall biogenesis; lipoteichoic acid biosynthesis. Its function is as follows. O-acyltransferase that catalyzes D-alanylation of both teichoic acid and lipoteichoic acid (LTA). D-alanylation of LTA plays an important role in modulating the properties of the cell wall in Gram-positive bacteria, influencing the net charge of the cell wall. Catalyzes D-alanylation from DltC carrier protein. This Streptococcus thermophilus (strain ATCC BAA-250 / LMG 18311) protein is Teichoic acid D-alanyltransferase.